We begin with the raw amino-acid sequence, 107 residues long: Ig kappa chain V-VI region XRPC 24 (107 aa).

The framework-1 stretch occupies residues 1 to 23 (EIVLTQSPAITAASLGQKVTITC). Residues Cys23 and Cys87 are joined by a disulfide bond. Residues 24–33 (SASSSVSYMH) form a complementarity-determining-1 region. The framework-2 stretch occupies residues 34-48 (WYQQKSGTSPKPWIY). The complementarity-determining-2 stretch occupies residues 49–55 (EISKLAS). Residues 56–87 (GVPARFSGSGSGTSYSLTISSMEAEDAAIYYC) form a framework-3 region. A complementarity-determining-3 region spans residues 88-96 (QQWNYPLIT). The interval 97–106 (FGSGTKLEIK) is framework-4.

In Mus musculus (Mouse), this protein is Ig kappa chain V-VI region XRPC 24.